Reading from the N-terminus, the 347-residue chain is Biotin synthase (347 aa).

The Radical SAM core domain occupies 54 to 273 (NHVETASLLS…IAVARIMMPK (220 aa)). Cys-69, Cys-73, and Cys-76 together coordinate [4Fe-4S] cluster. Residues Cys-113, Cys-144, Cys-204, and Arg-277 each coordinate [2Fe-2S] cluster.

The protein belongs to the radical SAM superfamily. Biotin synthase family. As to quaternary structure, homodimer. It depends on [4Fe-4S] cluster as a cofactor. The cofactor is [2Fe-2S] cluster.

It carries out the reaction (4R,5S)-dethiobiotin + (sulfur carrier)-SH + 2 reduced [2Fe-2S]-[ferredoxin] + 2 S-adenosyl-L-methionine = (sulfur carrier)-H + biotin + 2 5'-deoxyadenosine + 2 L-methionine + 2 oxidized [2Fe-2S]-[ferredoxin]. The protein operates within cofactor biosynthesis; biotin biosynthesis; biotin from 7,8-diaminononanoate: step 2/2. Catalyzes the conversion of dethiobiotin (DTB) to biotin by the insertion of a sulfur atom into dethiobiotin via a radical-based mechanism. In Afipia carboxidovorans (strain ATCC 49405 / DSM 1227 / KCTC 32145 / OM5) (Oligotropha carboxidovorans), this protein is Biotin synthase.